Reading from the N-terminus, the 425-residue chain is Riboflavin biosynthesis protein RibBA (425 aa).

Positions 1–204 (MTRLDSVERA…IADLIEWRRK (204 aa)) are DHBP synthase. Residues 28-29 (RE), aspartate 33, 141-145 (RPGHT), and glutamate 165 contribute to the D-ribulose 5-phosphate site. Position 29 (glutamate 29) interacts with Mg(2+). Histidine 144 serves as a coordination point for Mg(2+). The tract at residues 205-425 (HEKHIERVAE…HLPGEFGGAL (221 aa)) is GTP cyclohydrolase II. 259–263 (RVHSE) contacts GTP. Residues cysteine 264, cysteine 275, and cysteine 277 each coordinate Zn(2+). Residues glutamine 280, 303 to 305 (EGR), and threonine 325 contribute to the GTP site. The active-site Proton acceptor; for GTP cyclohydrolase activity is aspartate 337. Arginine 339 serves as the catalytic Nucleophile; for GTP cyclohydrolase activity. Residues threonine 360 and lysine 365 each contribute to the GTP site.

The protein in the N-terminal section; belongs to the DHBP synthase family. It in the C-terminal section; belongs to the GTP cyclohydrolase II family. The cofactor is Mg(2+). Requires Mn(2+) as cofactor. It depends on Zn(2+) as a cofactor.

It catalyses the reaction D-ribulose 5-phosphate = (2S)-2-hydroxy-3-oxobutyl phosphate + formate + H(+). It carries out the reaction GTP + 4 H2O = 2,5-diamino-6-hydroxy-4-(5-phosphoribosylamino)-pyrimidine + formate + 2 phosphate + 3 H(+). The protein operates within cofactor biosynthesis; riboflavin biosynthesis; 2-hydroxy-3-oxobutyl phosphate from D-ribulose 5-phosphate: step 1/1. It participates in cofactor biosynthesis; riboflavin biosynthesis; 5-amino-6-(D-ribitylamino)uracil from GTP: step 1/4. Functionally, catalyzes the conversion of D-ribulose 5-phosphate to formate and 3,4-dihydroxy-2-butanone 4-phosphate. Its function is as follows. Catalyzes the conversion of GTP to 2,5-diamino-6-ribosylamino-4(3H)-pyrimidinone 5'-phosphate (DARP), formate and pyrophosphate. This is Riboflavin biosynthesis protein RibBA from Mycobacterium bovis (strain ATCC BAA-935 / AF2122/97).